Here is a 970-residue protein sequence, read N- to C-terminus: Testis anion transporter 1 (970 aa).

Topologically, residues 1–95 are cytoplasmic; sequence MAQLERSAIS…YRLKDWLLGD (95 aa). The helical transmembrane segment at 96–116 threads the bilayer; sequence LLAGISVGLVQVPQGLTLSLL. Residues 117-119 lie on the Extracellular side of the membrane; that stretch reads ARQ. The chain crosses the membrane as a helical span at residues 120–140; it reads LIPPLNIAYAAFCSSVIYVIF. The Cytoplasmic segment spans residues 141-146; the sequence is GSCHQM. The chain crosses the membrane as a helical span at residues 147-167; it reads SIGSFFLVSALLINVLKVSPF. Residues 168–202 lie on the Extracellular side of the membrane; sequence NNGQLVMGSFVKNEFSAPSYLMGYNKSLSVVATTT. N-linked (GlcNAc...) asparagine glycosylation occurs at Asn192. Residues 203 to 223 form a helical membrane-spanning segment; sequence FLTGIIQLIMGVLGLGFIATY. Residues 224 to 232 are Cytoplasmic-facing; the sequence is LPESAMSAY. A helical membrane pass occupies residues 233–253; sequence LAAVALHIMLSQLTFIFGIMI. The Extracellular portion of the chain corresponds to 254–270; it reads SFHAGPISFFYDIINYC. A helical transmembrane segment spans residues 271–291; that stretch reads VALPKANSTSILVFLTVVVAL. Residues 292-307 lie on the Cytoplasmic side of the membrane; the sequence is RINKCIRISFNQYPIE. Residues 308–328 form a helical membrane-spanning segment; sequence FPMELFLIIGFTVIANKISMA. At 329 to 355 the chain is on the extracellular side; sequence TETSQTLIDMIPYSFLLPVTPDFSLLP. The helical transmembrane segment at 356–376 threads the bilayer; the sequence is KIILQAFSLSLVSSFLLIFLG. Residues 377–392 are Cytoplasmic-facing; that stretch reads KKIASLHNYSVNSNQD. A helical membrane pass occupies residues 393-413; sequence LIAIGLCNVVSSFFRSCVFTG. Residues 414-429 are Extracellular-facing; the sequence is AIARTIIQDKSGGRQQ. Residues 430–450 form a helical membrane-spanning segment; the sequence is FASLVGAGVMLLLMVKMGHFF. The Cytoplasmic portion of the chain corresponds to 451–452; that stretch reads YT. A helical membrane pass occupies residues 453–473; that stretch reads LPNAVLAGIILSNVIPYLETI. Residues 474 to 497 are Extracellular-facing; it reads SNLPSLWRQDQYDCALWMMTFSSS. The helical transmembrane segment at 498–518 threads the bilayer; the sequence is IFLGLDIGLIISVVSAFFITT. The Cytoplasmic portion of the chain corresponds to 519-970; that stretch reads VRSHRAKILL…SPEGNSNEDV (452 aa). The 253-residue stretch at 543–795 folds into the STAS domain; sequence DYREIITIPG…LSVHDAVLFA (253 aa). The tract at residues 664-970 is interaction with RACGAP1; that stretch reads TVSSVSQKNQ…SPEGNSNEDV (307 aa). Over residues 858–868 the composition is skewed to acidic residues; the sequence is SELDLELESEQ. Residues 858–970 form a disordered region; it reads SELDLELESE…SPEGNSNEDV (113 aa). The segment covering 877–898 has biased composition (basic and acidic residues); it reads DLDRELEPEMEPKAETETKTQT. Residues 938–948 are compositionally biased toward low complexity; that stretch reads STQSQTQTRTW.

Belongs to the SLC26A/SulP transporter (TC 2.A.53) family. As to quaternary structure, interacts with RACGAP1. Interacts with CFTR; stimulates anion transport activity of CFTR. Post-translationally, N-glycosylated. As to expression, expression observed exclusively in testis, restricted to the meiotic phase of the germ cell. Abundant expression located in the seminiferous tubules, concentrated on the luminal side of the tubuli harboring the spermatocytes and spermatids.

It is found in the membrane. The enzyme catalyses sulfate(out) + chloride(in) = sulfate(in) + chloride(out). It catalyses the reaction oxalate(in) + chloride(out) = oxalate(out) + chloride(in). Activity is inhibited by 4,4'-Di-isothiocyanatostilbene-2,2'-disulfonic acid (DIDS - an inhibitor of several anion channels and transporters) and gluconate. Antiporter that mediates the exchange of sulfate and oxalate against chloride ions across a membrane. Stimulates anion transport activity of CFTR. May cooperate with CFTR in the regulation of chloride and bicarbonate ions fluxes required for activation of the ADCY10/PKA pathway during sperm motility and sperm capacitation. May play a role in sperm tail differentiation and motility and hence male fertility. This chain is Testis anion transporter 1, found in Homo sapiens (Human).